The sequence spans 200 residues: Small ribosomal subunit protein uS4 (200 aa).

The disordered stretch occupies residues 22–41; sequence TGKELQKRPYAPGQHGPNQR. The S4 RNA-binding domain occupies 92 to 152; sequence SRLDNLVYRM…EKSRNLQVIK (61 aa).

Belongs to the universal ribosomal protein uS4 family. Part of the 30S ribosomal subunit. Contacts protein S5. The interaction surface between S4 and S5 is involved in control of translational fidelity.

In terms of biological role, one of the primary rRNA binding proteins, it binds directly to 16S rRNA where it nucleates assembly of the body of the 30S subunit. Its function is as follows. With S5 and S12 plays an important role in translational accuracy. This Halalkalibacterium halodurans (strain ATCC BAA-125 / DSM 18197 / FERM 7344 / JCM 9153 / C-125) (Bacillus halodurans) protein is Small ribosomal subunit protein uS4.